A 173-amino-acid chain; its full sequence is MDIAIQHPWFKRTLGPFYPSRLFDQFFGEGLFEYDLLPFLSSTISPYYRQSLFRTVLDSGISEVRSDRDKFVIFLDVKHFSPEDLTVKVQEDFVEIHGKHNERQDDHGYISREFHRRYRLPSNVDQSALSCSLSADGMLTFSGPKVPSGVDAGHSERAIPVSREEKPSSAPSS.

Position 1 is an N-acetylmethionine (methionine 1). Positions 1 to 63 (MDIAIQHPWF…RTVLDSGISE (63 aa)) are required for complex formation with BFSP1 and BFSP2. Deamidated glutamine; partial is present on glutamine 6. Position 45 is a phosphoserine (serine 45). At glutamine 50 the chain carries Deamidated glutamine; partial. Positions 52 to 162 (LFRTVLDSGI…GHSERAIPVS (111 aa)) constitute a sHSP domain. N6-acetyllysine is present on lysine 70. The residue at position 90 (glutamine 90) is a Deamidated glutamine; partial. An N6-acetyllysine modification is found at lysine 99. Histidine 100 contacts Zn(2+). Asparagine 101 bears the Deamidated asparagine; partial mark. 2 residues coordinate Zn(2+): glutamate 102 and histidine 107. Position 122 is a phosphoserine (serine 122). A Deamidated asparagine; partial modification is found at asparagine 123. The disordered stretch occupies residues 144–173 (PKVPSGVDAGHSERAIPVSREEKPSSAPSS). Positions 153-167 (GHSERAIPVSREEKP) are enriched in basic and acidic residues. Histidine 154 is a binding site for Zn(2+). The O-linked (GlcNAc) serine glycan is linked to serine 162.

It belongs to the small heat shock protein (HSP20) family. Heteromer composed of three CRYAA and one CRYAB subunits. Inter-subunit bridging via zinc ions enhances stability, which is crucial as there is no protein turn over in the lens. Can also form homodimers and homotetramers (dimers of dimers) which serve as the building blocks of homooligomers. Within homooligomers, the zinc-binding motif is created from residues of 3 different molecules. His-100 and Glu-102 from one molecule are ligands of the zinc ion, and His-107 and His-154 residues from additional molecules complete the site with tetrahedral coordination geometry. Part of a complex required for lens intermediate filament formation composed of BFSP1, BFSP2 and CRYAA. Post-translationally, acetylation at Lys-70 may increase chaperone activity. Undergoes age-dependent proteolytical cleavage at the C-terminus.

The protein localises to the cytoplasm. It is found in the nucleus. Its function is as follows. Contributes to the transparency and refractive index of the lens. Acts as a chaperone, preventing aggregation of various proteins under a wide range of stress conditions. Required for the correct formation of lens intermediate filaments as part of a complex composed of BFSP1, BFSP2 and CRYAA. The polypeptide is Alpha-crystallin A chain (CRYAA) (Ovis aries (Sheep)).